The following is a 450-amino-acid chain: ATP-dependent protease ATPase subunit HslU (450 aa).

Residues Val-29, 71 to 76, Asp-261, Glu-328, and Arg-400 contribute to the ATP site; that span reads GVGKTE.

The protein belongs to the ClpX chaperone family. HslU subfamily. As to quaternary structure, a double ring-shaped homohexamer of HslV is capped on each side by a ring-shaped HslU homohexamer. The assembly of the HslU/HslV complex is dependent on binding of ATP.

It localises to the cytoplasm. Functionally, ATPase subunit of a proteasome-like degradation complex; this subunit has chaperone activity. The binding of ATP and its subsequent hydrolysis by HslU are essential for unfolding of protein substrates subsequently hydrolyzed by HslV. HslU recognizes the N-terminal part of its protein substrates and unfolds these before they are guided to HslV for hydrolysis. In Rickettsia conorii (strain ATCC VR-613 / Malish 7), this protein is ATP-dependent protease ATPase subunit HslU.